Consider the following 152-residue polypeptide: Ubiquitin-conjugating enzyme E2 1 (152 aa).

The UBC core domain occupies 4–150 (PARKRLMRDF…VRDVVEQSWT (147 aa)). Cysteine 88 (glycyl thioester intermediate) is an active-site residue. Residues 119-152 (NSPANSEAARMYSESKREYNRRVRDVVEQSWTAD) form a disordered region. The segment covering 131–145 (SESKREYNRRVRDVV) has biased composition (basic and acidic residues).

This sequence belongs to the ubiquitin-conjugating enzyme family. As to expression, ubiquitously expressed.

It catalyses the reaction S-ubiquitinyl-[E1 ubiquitin-activating enzyme]-L-cysteine + [E2 ubiquitin-conjugating enzyme]-L-cysteine = [E1 ubiquitin-activating enzyme]-L-cysteine + S-ubiquitinyl-[E2 ubiquitin-conjugating enzyme]-L-cysteine.. It participates in protein modification; protein ubiquitination. Accepts the ubiquitin from the E1 complex and catalyzes its covalent attachment to other proteins. The protein is Ubiquitin-conjugating enzyme E2 1 (UBC1) of Arabidopsis thaliana (Mouse-ear cress).